The primary structure comprises 409 residues: MKPVVLVALLWLWPSSFLAYPTATVLPDEEQNLNHYVQILQNLIMSVPTKEQGFGRKFRSSRTVDGAEARSLSSEMLLTPGLVSAQEVTTPETEVMLTSMVEKTTFPSSGFTMESEKRRTHSKAFWSIQPNNVSIVLHTEEPYIEKEPEPEPELETEEESRRLATEPEPEPESESAPETETRQTAESEEEVETSTAQNKVRTGTSRMSTVITQTTNTQGTPNTVTVKTINNLDVSTESEDVPQLSGQSEILNVEDLPGHHSLSTRHENILRKISNINSQIHQGLLSDHSSPAYKEFIKASREHLKRSLALAAAAEHKLQQMYGSNVFLDGHTSDPDDDMEVIINMLYNSRSKLSDYFTINHVPSELREKATVVIAVLKKILCVDQVEMQSLIRKLLSNNMKILNILNVP.

A signal peptide spans 1 to 18; the sequence is MKPVVLVALLWLWPSSFL. A glycan (N-linked (GlcNAc...) asparagine) is linked at Asn132. The segment at 141–223 is disordered; that stretch reads EPYIEKEPEP…TTNTQGTPNT (83 aa). Positions 167–177 are enriched in acidic residues; the sequence is PEPEPESESAP. Positions 198 to 208 are enriched in polar residues; that stretch reads NKVRTGTSRMS. Residues 209 to 223 are compositionally biased toward low complexity; that stretch reads TVITQTTNTQGTPNT.

Belongs to the SPESP1 family. In terms of processing, glycosylated. In testis there are two predominant forms of 77- and 67-kDa and a form of 47-kDa, whereas in epididymal sperm from caput, corpus, and cauda there are two forms of 47- and 43-kDa. Testis forms contain complex carbohydrate residues. Epididymal sperm forms are N-glycosylated. Then undergoes significant glycosylation in the testis and that the majority of these glycoconjugates are removed by the time sperm reach the caput epididymis.

It localises to the cytoplasmic vesicle. It is found in the secretory vesicle. The protein localises to the acrosome. In terms of biological role, involved in fertilization ability of sperm. This is Sperm equatorial segment protein 1 from Rattus norvegicus (Rat).